A 268-amino-acid polypeptide reads, in one-letter code: Mediator of RNA polymerase II transcription subunit 18 (268 aa).

A disordered region spans residues 91–112 (APASPVADQDAHMSGTDEKSSV). A compositionally biased stretch (basic and acidic residues) spans 99–112 (QDAHMSGTDEKSSV).

Belongs to the Mediator complex subunit 18 family. As to quaternary structure, component of the Mediator complex.

The protein localises to the nucleus. In terms of biological role, component of the Mediator complex, a coactivator involved in the regulated transcription of nearly all RNA polymerase II-dependent genes. Mediator functions as a bridge to convey information from gene-specific regulatory proteins to the basal RNA polymerase II transcription machinery. Mediator is recruited to promoters by direct interactions with regulatory proteins and serves as a scaffold for the assembly of a functional preinitiation complex with RNA polymerase II and the general transcription factors. The sequence is that of Mediator of RNA polymerase II transcription subunit 18 (srb5) from Aspergillus fumigatus (strain ATCC MYA-4609 / CBS 101355 / FGSC A1100 / Af293) (Neosartorya fumigata).